The chain runs to 190 residues: Peptidyl-tRNA hydrolase (190 aa).

Tyrosine 18 provides a ligand contact to tRNA. Catalysis depends on histidine 23, which acts as the Proton acceptor. TRNA contacts are provided by phenylalanine 67, asparagine 69, and asparagine 115.

This sequence belongs to the PTH family. In terms of assembly, monomer.

The protein localises to the cytoplasm. The catalysed reaction is an N-acyl-L-alpha-aminoacyl-tRNA + H2O = an N-acyl-L-amino acid + a tRNA + H(+). Functionally, hydrolyzes ribosome-free peptidyl-tRNAs (with 1 or more amino acids incorporated), which drop off the ribosome during protein synthesis, or as a result of ribosome stalling. In terms of biological role, catalyzes the release of premature peptidyl moieties from peptidyl-tRNA molecules trapped in stalled 50S ribosomal subunits, and thus maintains levels of free tRNAs and 50S ribosomes. In Leptospira interrogans serogroup Icterohaemorrhagiae serovar Lai (strain 56601), this protein is Peptidyl-tRNA hydrolase.